The primary structure comprises 221 residues: Glutathione peroxidase (221 aa).

An N-terminal signal peptide occupies residues 1–19 (MFIQLLILSYAILLQLIAT). N-linked (GlcNAc...) asparagine glycosylation occurs at Asn28. Cys72 is an active-site residue. N-linked (GlcNAc...) asparagine glycosylation is found at Asn87 and Asn90.

Belongs to the glutathione peroxidase family. Homotetramer.

It localises to the secreted. Its subcellular location is the extracellular space. The enzyme catalyses 2 glutathione + H2O2 = glutathione disulfide + 2 H2O. The protein is Glutathione peroxidase of Dirofilaria immitis (Canine heartworm).